A 658-amino-acid chain; its full sequence is ATP-dependent DNA helicase Rep (658 aa).

One can recognise a UvrD-like helicase ATP-binding domain in the interval 1 to 280 (MSLNFNQKNA…IKMEQNYRSY (280 aa)). Residues 22–29 (AGAGSGKT) and Arg278 contribute to the ATP site. The UvrD-like helicase C-terminal domain occupies 281-564 (GRILKAANKL…QLMTLHSSKG (284 aa)).

Belongs to the helicase family. UvrD subfamily. In terms of assembly, homodimer.

The catalysed reaction is Couples ATP hydrolysis with the unwinding of duplex DNA by translocating in the 3'-5' direction.. It catalyses the reaction ATP + H2O = ADP + phosphate + H(+). In terms of biological role, rep helicase is a single-stranded DNA-dependent ATPase involved in DNA replication; it can initiate unwinding at a nick in the DNA. It binds to the single-stranded DNA and acts in a progressive fashion along the DNA in the 3' to 5' direction. This Buchnera aphidicola subsp. Schizaphis graminum (strain Sg) protein is ATP-dependent DNA helicase Rep.